Here is a 310-residue protein sequence, read N- to C-terminus: tRNA dimethylallyltransferase (310 aa).

5 to 12 provides a ligand contact to ATP; it reads GPTASGKS. Substrate is bound at residue 7–12; that stretch reads TASGKS. The segment at 30–33 is interaction with substrate tRNA; that stretch reads DSMQ.

Belongs to the IPP transferase family. As to quaternary structure, monomer. The cofactor is Mg(2+).

The catalysed reaction is adenosine(37) in tRNA + dimethylallyl diphosphate = N(6)-dimethylallyladenosine(37) in tRNA + diphosphate. Functionally, catalyzes the transfer of a dimethylallyl group onto the adenine at position 37 in tRNAs that read codons beginning with uridine, leading to the formation of N6-(dimethylallyl)adenosine (i(6)A). This is tRNA dimethylallyltransferase from Rhodopseudomonas palustris (strain HaA2).